Consider the following 460-residue polypeptide: ATP synthase subunit beta (460 aa).

150 to 157 (GGAGVGKT) contacts ATP.

The protein belongs to the ATPase alpha/beta chains family. As to quaternary structure, F-type ATPases have 2 components, CF(1) - the catalytic core - and CF(0) - the membrane proton channel. CF(1) has five subunits: alpha(3), beta(3), gamma(1), delta(1), epsilon(1). CF(0) has three main subunits: a(1), b(2) and c(9-12). The alpha and beta chains form an alternating ring which encloses part of the gamma chain. CF(1) is attached to CF(0) by a central stalk formed by the gamma and epsilon chains, while a peripheral stalk is formed by the delta and b chains.

The protein localises to the cell inner membrane. The catalysed reaction is ATP + H2O + 4 H(+)(in) = ADP + phosphate + 5 H(+)(out). In terms of biological role, produces ATP from ADP in the presence of a proton gradient across the membrane. The catalytic sites are hosted primarily by the beta subunits. This chain is ATP synthase subunit beta, found in Escherichia coli (strain SMS-3-5 / SECEC).